A 620-amino-acid polypeptide reads, in one-letter code: 1-deoxy-D-xylulose-5-phosphate synthase (620 aa).

Thiamine diphosphate-binding positions include His80 and 121–123; that span reads GHS. Asp152 is a Mg(2+) binding site. Thiamine diphosphate is bound by residues 153–154, Asn181, Tyr288, and Glu370; that span reads GA. Residue Asn181 coordinates Mg(2+).

It belongs to the transketolase family. DXPS subfamily. Homodimer. Mg(2+) is required as a cofactor. Requires thiamine diphosphate as cofactor.

It carries out the reaction D-glyceraldehyde 3-phosphate + pyruvate + H(+) = 1-deoxy-D-xylulose 5-phosphate + CO2. It functions in the pathway metabolic intermediate biosynthesis; 1-deoxy-D-xylulose 5-phosphate biosynthesis; 1-deoxy-D-xylulose 5-phosphate from D-glyceraldehyde 3-phosphate and pyruvate: step 1/1. Functionally, catalyzes the acyloin condensation reaction between C atoms 2 and 3 of pyruvate and glyceraldehyde 3-phosphate to yield 1-deoxy-D-xylulose-5-phosphate (DXP). The polypeptide is 1-deoxy-D-xylulose-5-phosphate synthase (Citrobacter koseri (strain ATCC BAA-895 / CDC 4225-83 / SGSC4696)).